The following is a 209-amino-acid chain: Uridine kinase (209 aa).

12-19 lines the ATP pocket; the sequence is GGSGSGKT.

Belongs to the uridine kinase family.

It is found in the cytoplasm. It carries out the reaction uridine + ATP = UMP + ADP + H(+). The catalysed reaction is cytidine + ATP = CMP + ADP + H(+). The protein operates within pyrimidine metabolism; CTP biosynthesis via salvage pathway; CTP from cytidine: step 1/3. It participates in pyrimidine metabolism; UMP biosynthesis via salvage pathway; UMP from uridine: step 1/1. The sequence is that of Uridine kinase from Streptococcus mutans serotype c (strain ATCC 700610 / UA159).